Consider the following 304-residue polypeptide: 15-cis-phytoene synthase (304 aa).

This sequence belongs to the phytoene/squalene synthase family. Requires ATP as cofactor. Mn(2+) serves as cofactor. The cofactor is Mg(2+).

The enzyme catalyses 2 (2E,6E,10E)-geranylgeranyl diphosphate = 15-cis-phytoene + 2 diphosphate. Its pathway is carotenoid biosynthesis; astaxanthin biosynthesis. It functions in the pathway carotenoid biosynthesis; phytoene biosynthesis. Functionally, involved in the biosynthesis of carotenoids for the production of astaxanthin. Catalyzes the condensation of two molecules of geranylgeranyl diphosphate (GGPP) to give prephytoene diphosphate (PPPP) and the subsequent rearrangement of the cyclopropylcarbinyl intermediate to yield 15-cis phytoene. The protein is 15-cis-phytoene synthase (crtB) of Paracoccus sp. (strain N81106 / MBIC 01143) (Agrobacterium aurantiacum).